A 475-amino-acid chain; its full sequence is Rho GTPase-activating protein 15 (475 aa).

A disordered region spans residues 1 to 22 (MERSTTSDTASEKPNPSHSTGA). The 111-residue stretch at 80-190 (VVEKEGYLLK…WFHAIKNAID (111 aa)) folds into the PH domain. Residues 281–470 (SHLHLVCEHE…LMLSEYSKIF (190 aa)) enclose the Rho-GAP domain.

The protein localises to the cytoplasm. It localises to the membrane. GTPase activator for the Rho-type GTPases by converting them to an inactive GDP-bound state. The polypeptide is Rho GTPase-activating protein 15 (ARHGAP15) (Gallus gallus (Chicken)).